The primary structure comprises 868 residues: LPS-assembly protein LptD (868 aa).

The signal sequence occupies residues 1–24 (MLKGIHKYLLMCFGTVLFTVQANA).

This sequence belongs to the LptD family. In terms of assembly, component of the lipopolysaccharide transport and assembly complex. Interacts with LptE and LptA.

The protein localises to the cell outer membrane. Functionally, together with LptE, is involved in the assembly of lipopolysaccharide (LPS) at the surface of the outer membrane. In Francisella tularensis subsp. novicida (strain U112), this protein is LPS-assembly protein LptD.